Here is a 343-residue protein sequence, read N- to C-terminus: Probable transposase for insertion sequence element (343 aa).

Belongs to the transposase mutator family.

Its function is as follows. Required for the transposition of the insertion element. The chain is Probable transposase for insertion sequence element from Corynebacterium diphtheriae.